The following is a 640-amino-acid chain: Probable serine/threonine-protein kinase samkA (640 aa).

The SAM domain maps to 21–84 (WNNEKIIKWL…SEFEILKNNY (64 aa)). The stretch at 73-100 (FKSEFEILKNNYDNNNNNNNNNNNNNNN) forms a coiled coil. A disordered region spans residues 84–165 (YDNNNNNNNN…INFNSNSNIT (82 aa)). A Protein kinase domain is found at 191 to 437 (YEYVESISLG…SKDLQKLSWF (247 aa)). ATP contacts are provided by residues 197 to 205 (ISLGVFSVV) and lysine 221. The active-site Proton acceptor is the aspartate 312. Residues 448 to 482 (QELTKSTTNTTTTTTTTTTPPPPPSPSSSSPSMNE) are disordered. Positions 453–465 (STTNTTTTTTTTT) are enriched in low complexity.

It belongs to the protein kinase superfamily. Ser/Thr protein kinase family.

The enzyme catalyses L-seryl-[protein] + ATP = O-phospho-L-seryl-[protein] + ADP + H(+). It carries out the reaction L-threonyl-[protein] + ATP = O-phospho-L-threonyl-[protein] + ADP + H(+). In Dictyostelium discoideum (Social amoeba), this protein is Probable serine/threonine-protein kinase samkA (samkA).